A 448-amino-acid polypeptide reads, in one-letter code: Probable glycine dehydrogenase (decarboxylating) subunit 1 (448 aa).

It belongs to the GcvP family. N-terminal subunit subfamily. As to quaternary structure, the glycine cleavage system is composed of four proteins: P, T, L and H. In this organism, the P 'protein' is a heterodimer of two subunits.

The enzyme catalyses N(6)-[(R)-lipoyl]-L-lysyl-[glycine-cleavage complex H protein] + glycine + H(+) = N(6)-[(R)-S(8)-aminomethyldihydrolipoyl]-L-lysyl-[glycine-cleavage complex H protein] + CO2. The glycine cleavage system catalyzes the degradation of glycine. The P protein binds the alpha-amino group of glycine through its pyridoxal phosphate cofactor; CO(2) is released and the remaining methylamine moiety is then transferred to the lipoamide cofactor of the H protein. The polypeptide is Probable glycine dehydrogenase (decarboxylating) subunit 1 (Bacillus licheniformis (strain ATCC 14580 / DSM 13 / JCM 2505 / CCUG 7422 / NBRC 12200 / NCIMB 9375 / NCTC 10341 / NRRL NRS-1264 / Gibson 46)).